Consider the following 308-residue polypeptide: Baculoviral IAP repeat-containing protein bir-2 (308 aa).

BIR repeat units lie at residues 27–98 (RFAS…EFVM) and 170–241 (RLAT…DFIK). The Zn(2+) site is built by C68, C71, H87, C94, C211, C214, H230, and C237.

It belongs to the IAP family.

The sequence is that of Baculoviral IAP repeat-containing protein bir-2 from Caenorhabditis elegans.